Reading from the N-terminus, the 602-residue chain is Sodium-independent sulfate anion transporter (602 aa).

The Extracellular segment spans residues 1 to 47 (MSPPMSPMKPPKGFAPMSCCWSTETMQKWLPFLGWLPDYTWYALKMD). A helical transmembrane segment spans residues 48–68 (FIAGISVGLTVIPQALAYAEV). Alanine 69 is a topological domain (cytoplasmic). A helical transmembrane segment spans residues 70–90 (GLPPQYGLYSAFMGCFVYFFL). The Extracellular segment spans residues 91–115 (GTSRDVTLGPTAIMSLLVSFYTFHE). The chain crosses the membrane as a helical span at residues 116–136 (PAYAVLLAFLTGCIQLGMGFL). Topologically, residues 137–143 (RLGLLLD) are cytoplasmic. The helical transmembrane segment at 144-164 (FISCPVIKGFTSAAAIIIGFG) threads the bilayer. Over 165 to 193 (QIKNLLGLQHIPRQFFLQVYYTFHNIGET) the chain is Extracellular. A helical transmembrane segment spans residues 194-214 (RVGDAVLGLVCMVLLLVLKLM). Topologically, residues 215–246 (RDHVPPVHPEMPTGVRLSHGLVWTATTARNAL) are cytoplasmic. Residues 247-267 (VVSFAALVAYSFQVTGYQPFV) form a helical membrane-spanning segment. At 268-300 (LTGKTPEGLPDAHIPPFSVTTANGTISFTEMVQ) the chain is on the extracellular side. Residues 301 to 321 (GMGAGLVVVPLMGLLESIAVA) traverse the membrane as a helical segment. Topologically, residues 322–337 (KSFASQNNYRINSNQE) are cytoplasmic. The chain crosses the membrane as a helical span at residues 338-358 (LLALGFTNILGSLFSSYPVTG). Residues 359–370 (SFGRTAVNAQSG) lie on the Extracellular side of the membrane. The helical transmembrane segment at 371–391 (VCTPAGGLMTGALVLLSLDYL) threads the bilayer. The Cytoplasmic segment spans residues 392 to 394 (TSL). Residues 395–415 (FYYIPKSALAAVIIMAVVPLF) traverse the membrane as a helical segment. Residues 416–438 (DTKIVKTLWRVKRLDLLPLCVTF) are Extracellular-facing. A helical membrane pass occupies residues 439–459 (LLCFWEVQYGILAGTLVSVLI). Residues 460 to 602 (LLHSVARPKI…PEHKIALLKA (143 aa)) lie on the Cytoplasmic side of the membrane. The region spanning 466-580 (RPKIQVSEGP…EAEKYLKQEP (115 aa)) is the STAS domain.

This sequence belongs to the SLC26A/SulP transporter (TC 2.A.53) family.

It localises to the cell membrane. It is found in the lysosome membrane. The protein localises to the apical cell membrane. The protein resides in the basolateral cell membrane. It catalyses the reaction hydrogencarbonate(in) + chloride(out) = hydrogencarbonate(out) + chloride(in). The catalysed reaction is sulfate(in) + H(+)(in) = sulfate(out) + H(+)(out). The enzyme catalyses oxalate(in) + chloride(out) = oxalate(out) + chloride(in). Functionally, sodium-independent anion exchanger mediating bicarbonate, chloride, sulfate and oxalate transport. Exhibits sodium-independent sulfate anion transporter activity that may cooperate with SLC26A2 to mediate DIDS-sensitive sulfate uptake into high endothelial venules endothelial cells (HEVEC). In the kidney, mediates chloride-bicarbonate exchange, facilitating V-ATPase-mediated acid secretion. May function as a chloride channel, playing an important role in moderating chloride homeostasis and neuronal activity in the cerebellum. The sequence is that of Sodium-independent sulfate anion transporter from Bos taurus (Bovine).